A 456-amino-acid chain; its full sequence is General transcription factor IIE subunit 1 (456 aa).

Residues 11–100 (LDDLVKMVIR…LWYIDYKHII (90 aa)) enclose the HTH TFE/IIEalpha-type domain. The segment at 129 to 157 (CQTCHKVYTALDIPKLLNMDTGALACEIC) adopts a C4-type zinc-finger fold. Residues 345–402 (ESAPDSGDADGNGSNSGSGGSTIEGNDGGNGEHQNKKMKLDDSQTVSSMSQSDDDGKD) are disordered. Positions 347–357 (APDSGDADGNG) are enriched in low complexity. Positions 358-375 (SNSGSGGSTIEGNDGGNG) are enriched in gly residues. Positions 377 to 386 (HQNKKMKLDD) are enriched in basic and acidic residues.

Belongs to the TFIIE alpha subunit family. In terms of assembly, TFIIE is a tetramer of two alpha and two beta subunits.

It is found in the nucleus. Recruits TFIIH to the initiation complex and stimulates the RNA polymerase II C-terminal domain kinase and DNA-dependent ATPase activities of TFIIH. Both TFIIH and TFIIE are required for promoter clearance by RNA polymerase. The sequence is that of General transcription factor IIE subunit 1 (gtf2e1-1) from Dictyostelium discoideum (Social amoeba).